The sequence spans 109 residues: U26-theraphotoxin-Cg1b (109 aa).

A signal peptide spans 1-18; that stretch reads MNTIIPLLLLSLLITVYA. Positions 19–67 are excised as a propeptide; it reads YALEDGNKEEMQDIAESEFEASNEMLQLAHLLEADRAETEEDRNSRQKR. Intrachain disulfides connect Cys-68–Cys-83, Cys-75–Cys-88, and Cys-82–Cys-103.

Belongs to the neurotoxin 14 (magi-1) family. 07 (Jztx-56) subfamily. Expressed by the venom gland.

The protein localises to the secreted. Functionally, probable ion channel inhibitor. This chain is U26-theraphotoxin-Cg1b, found in Chilobrachys guangxiensis (Chinese earth tiger tarantula).